A 411-amino-acid polypeptide reads, in one-letter code: MAEKTEKPTAKKLRDAAKKGQTFKARDIVALIVIATGALAAPALVDLTRIAAEFVRIASTGAQPNPGAYAFAWAKLFLRIAAPFVLLCAAAGALPSLVQSRFTLAVESIRFDLTALDPVKGMKRLFSWRSAKDAVKALLYVGVFALTVRVFAGLYHADVFGLFRARPALLGHMWIVLTVRLVLLFLLCALPVLILDAAVEYFLYHRELKMDKHEVKQEYKESEGNHEIKSKRREIHQELLSEEIKANVEQSDFIVANPTHIAIGVYVNPDIVPIPFVSVRETNARALAVIRHAEACGVPVVRNVALARSIYRNSPRRYSFVSHDDIDGVMRVLIWLGEVEAANRGGPPPETRALTSAEPQARDGVAPPGDACADNAFPDDAPPGAAAPNAGSPDGPAPDGGAPARTGDQNA.

Helical transmembrane passes span 28–48 (IVALIVIATGALAAPALVDLT), 80–100 (IAAPFVLLCAAAGALPSLVQS), 137–157 (ALLYVGVFALTVRVFAGLYHA), and 175–195 (IVLTVRLVLLFLLCALPVLIL). The tract at residues 341-411 (AANRGGPPPE…APARTGDQNA (71 aa)) is disordered. The span at 370–404 (DACADNAFPDDAPPGAAAPNAGSPDGPAPDGGAPA) shows a compositional bias: low complexity.

It belongs to the type III secretion exporter family.

It is found in the cell membrane. Functionally, part of the bsa type III secretion system, is involved in the intracellular replication of invading bacteria inside the host cell. Probably necessary for the lysis of the vacuole membrane and escape into the host cell cytoplasm. In Burkholderia pseudomallei (strain 1710b), this protein is Secretion apparatus protein BsaZ (bsaZ).